The following is a 197-amino-acid chain: LexA repressor (197 aa).

Positions 28-47 (VREIARRFRITPRGALLHLI) form a DNA-binding region, H-T-H motif. Catalysis depends on for autocatalytic cleavage activity residues Ser119 and Lys156.

It belongs to the peptidase S24 family. In terms of assembly, homodimer.

It carries out the reaction Hydrolysis of Ala-|-Gly bond in repressor LexA.. Its function is as follows. Represses a number of genes involved in the response to DNA damage (SOS response), including recA and lexA. In the presence of single-stranded DNA, RecA interacts with LexA causing an autocatalytic cleavage which disrupts the DNA-binding part of LexA, leading to derepression of the SOS regulon and eventually DNA repair. This is LexA repressor from Thermotoga sp. (strain RQ2).